Here is a 647-residue protein sequence, read N- to C-terminus: Protein FAM161B (647 aa).

Disordered stretches follow at residues 1–39 (MTVG…GDGL), 89–110 (SDPE…FFQD), and 135–167 (LNNL…SWAS). A compositionally biased stretch (acidic residues) spans 91–105 (PESDENLSEDEEDLE). Residues 262–292 (LEKEEQLKEAARQRDLAATAEAKISKQKATR) adopt a coiled-coil conformation. The segment covering 332–350 (PIASSSNRANPQPRTATRT) has biased composition (polar residues). Disordered regions lie at residues 332-352 (PIAS…RTQQ) and 388-439 (KRRE…RSRS). Residues 510 to 546 (LEEVFKAKLKENRNNDRKRAKEYKKELEEMKQRIQTR) adopt a coiled-coil conformation. Residues 583-647 (KGQGTRAVQE…QSPENLVSLA (65 aa)) form a disordered region. The segment covering 590–602 (VQEKETKIKDFPR) has biased composition (basic and acidic residues). Positions 637–647 (HQSPENLVSLA) are enriched in polar residues.

It belongs to the FAM161 family. Interacts with FAM161A. Ubiquitously expressed.

This Homo sapiens (Human) protein is Protein FAM161B (FAM161B).